The primary structure comprises 173 residues: RNA polymerase sigma factor TcsR (173 aa).

Residues 122-169 are sigma-70 factor domain-4; the sequence is IKDLTQNEKNIIRKIYLDRLRESEISRELNISRQAVNKTHLRALEKLK. A DNA-binding region (H-T-H motif) is located at residues 143–162; it reads ESEISRELNISRQAVNKTHL.

It belongs to the sigma-70 factor family.

Sigma factors are initiation factors that promote the attachment of RNA polymerase to specific initiation sites and are then released. Transcriptional regulator specifically required to activate expression of the toxin gene locus, composed of tcsL, tcsH and tcdE/utxA. This is RNA polymerase sigma factor TcsR from Paraclostridium sordellii (Clostridium sordellii).